A 344-amino-acid polypeptide reads, in one-letter code: Geranylgeranyl transferase type-2 subunit alpha (344 aa).

PFTA repeat units lie at residues 44-78 (YSEGNLKLTTELLDWNPETYSVWNYRREILLNDVF), 89-123 (LLDNELKYVLSKMKVFPKVYWIFNHRRWCLENAPY), 125-159 (NWNYEMMITEKLLSADARNFHGWHYRRYVVSQIER), 165-199 (LAKKEMEYTTSAIATNFSNFSALHNRTKLIETILN), 214-248 (ILEQELDMIHQAVFTDPDDSSVWIYHRWLMGHCNP), and 266-293 (YLQKEIELIQELHEMEPENRWCCESLVN).

It belongs to the protein prenyltransferase subunit alpha family. In terms of assembly, heterodimer of an alpha and a beta subunit.

The enzyme catalyses geranylgeranyl diphosphate + L-cysteinyl-[protein] = S-geranylgeranyl-L-cysteinyl-[protein] + diphosphate. Its function is as follows. Catalyzes the transfer of a geranyl-geranyl moiety from geranyl-geranyl pyrophosphate to proteins having the C-terminal-XCC or -XCXC, where both cysteines may become modified. This chain is Geranylgeranyl transferase type-2 subunit alpha (bet4), found in Schizosaccharomyces pombe (strain 972 / ATCC 24843) (Fission yeast).